The chain runs to 207 residues: Protein GET1 (207 aa).

Over 1–4 (MPSL) the chain is Lumenal. A helical transmembrane segment spans residues 5–24 (LISVLFLHIAIYIINTIGAS). Residues 25-110 (TIDSLLWLIY…LFDVAVKALR (86 aa)) lie on the Cytoplasmic side of the membrane. Positions 44-97 (MAREQHQMKLEVVQLKREMNATSSQDEFAKWAKLRRRHDKALEEYEVKNKQFSR) form a coiled coil. The chain crosses the membrane as a helical span at residues 111–131 (WAGTSGLILLLQFWFSKTPIF). The Lumenal portion of the chain corresponds to 132–155 (TLPPSWIPWQVEWVLSFPRAPMGT). Residues 156 to 172 (VSIQVWGGACAVMVALV) traverse the membrane as a helical segment. At 173–207 (GEAIGATVRYLYGSKDSMEAIKVGAGAVEKEKKRQ) the chain is on the cytoplasmic side.

The protein belongs to the WRB/GET1 family. As to quaternary structure, interacts with GET3.

The protein resides in the endoplasmic reticulum membrane. In terms of biological role, required for the post-translational delivery of tail-anchored (TA) proteins to the endoplasmic reticulum. Acts as a membrane receptor for soluble GET3, which recognizes and selectively binds the transmembrane domain of TA proteins in the cytosol. The chain is Protein GET1 from Paracoccidioides lutzii (strain ATCC MYA-826 / Pb01) (Paracoccidioides brasiliensis).